We begin with the raw amino-acid sequence, 288 residues long: RanBP2-type zinc finger protein At1g67325 (288 aa).

A compositionally biased stretch (polar residues) spans 1–11 (MSQVDNRNSSA). 5 disordered regions span residues 1–24 (MSQVDNRNSSAAKRARTDGGRRED), 52–77 (PADHNGKSAPKPMQHQQGFSSPGAYL), 176–198 (MPRPRFYPDEKSQKRDSTRDNDW), 222–248 (PKPGSQQGGSSDKISKQNAPEGSWKCD), and 265–288 (NCGADKPGDRSNGSPSRAPEENDQ). The segment covering 15–24 (ARTDGGRRED) has biased composition (basic and acidic residues). 3 consecutive RanBP2-type zinc fingers follow at residues 22–53 (REDDWICPSCGNVNFSFRTTCNMRNCTQPRPA), 194–225 (RDNDWTCPNCGNVNFSFRTVCNMRKCNTPKPG), and 241–272 (PEGSWKCDNCGNINYPFRSKCNRQNCGADKPG). A compositionally biased stretch (basic and acidic residues) spans 181–197 (FYPDEKSQKRDSTRDND). Polar residues predominate over residues 223 to 241 (KPGSQQGGSSDKISKQNAP). S278 bears the Phosphoserine mark.

The protein is RanBP2-type zinc finger protein At1g67325 of Arabidopsis thaliana (Mouse-ear cress).